Here is a 474-residue protein sequence, read N- to C-terminus: PRAME family member 8 (474 aa).

One copy of the LRR 1; degenerate repeat lies at Gln-97–Ser-122. One copy of the LRR 2; degenerate repeat lies at His-177–Glu-201. Residues Leu-202–Gln-228 form an LRR 3; degenerate repeat. An LRR 4; degenerate repeat occupies Met-229–Lys-264. LRR repeat units lie at residues Leu-265–Leu-290, Gln-291–Lys-322, Glu-323–Gly-341, Val-347–Arg-374, and Cys-375–His-399.

The protein belongs to the PRAME family.

This chain is PRAME family member 8, found in Homo sapiens (Human).